We begin with the raw amino-acid sequence, 279 residues long: Four and a half LIM domains protein 2 (279 aa).

The C4-type zinc-finger motif lies at 7–31 (CHHCNESLYGKKYILKEENPHCVAC). 3 consecutive LIM zinc-binding domains span residues 40-92 (CEEC…CTDC), 101-153 (CQEC…CVPC), and 162-212 (CVQC…CLTC). Lysine 78 participates in a covalent cross-link: Glycyl lysine isopeptide (Lys-Gly) (interchain with G-Cter in SUMO2). Glycyl lysine isopeptide (Lys-Gly) (interchain with G-Cter in SUMO2) cross-links involve residues lysine 167 and lysine 220. One can recognise an LIM zinc-binding 4 domain in the interval 221–275 (CAGCTNPISGLGGTKYISFEERQWHNDCFNCKKCSLSLVGRGFLTERDDILCPDC). Phosphoserine is present on serine 238.

In terms of assembly, interacts with ZNF638 and TTN/titin. Interacts with E4F1. Interacts with GRB7. Interacts with SIRT1 and FOXO1. Interacts with CEFIP and calcineurin. Interacts with FOXK1. In terms of tissue distribution, expressed in heart only (at protein level).

The protein localises to the cytoplasm. Its subcellular location is the nucleus. It localises to the myofibril. It is found in the sarcomere. The protein resides in the z line. In terms of biological role, may function as a molecular transmitter linking various signaling pathways to transcriptional regulation. Negatively regulates the transcriptional repressor E4F1 and may function in cell growth. Inhibits the transcriptional activity of FOXO1 and its apoptotic function by enhancing the interaction of FOXO1 with SIRT1 and FOXO1 deacetylation. Negatively regulates the calcineurin/NFAT signaling pathway in cardiomyocytes. This chain is Four and a half LIM domains protein 2 (Fhl2), found in Rattus norvegicus (Rat).